Reading from the N-terminus, the 332-residue chain is Fructose-bisphosphate aldolase (332 aa).

Ser-56 is a D-glyceraldehyde 3-phosphate binding site. The active-site Proton donor is the Asp-93. His-94, Asp-115, Glu-147, and His-191 together coordinate Zn(2+). A dihydroxyacetone phosphate-binding site is contributed by Gly-192. His-234 is a binding site for Zn(2+). Dihydroxyacetone phosphate is bound by residues 235–237 (GAS) and 277–280 (NIDS).

Belongs to the class II fructose-bisphosphate aldolase family. As to quaternary structure, homodimer. Zn(2+) serves as cofactor.

The enzyme catalyses beta-D-fructose 1,6-bisphosphate = D-glyceraldehyde 3-phosphate + dihydroxyacetone phosphate. Its pathway is carbohydrate degradation; glycolysis; D-glyceraldehyde 3-phosphate and glycerone phosphate from D-glucose: step 4/4. Catalyzes the aldol condensation of dihydroxyacetone phosphate (DHAP or glycerone-phosphate) with glyceraldehyde 3-phosphate (G3P) to form fructose 1,6-bisphosphate (FBP) in gluconeogenesis and the reverse reaction in glycolysis. In Treponema pallidum (strain Nichols), this protein is Fructose-bisphosphate aldolase (fba).